A 371-amino-acid chain; its full sequence is MSAQAQMRALLDQLMGTARDGDETRQRVKFTDDRVCKSHLLDCCPHDILAGTRMDLGECTKIHDLALRADYEIASKERDLFFELDAMDHLESFIAECDRRTELAKKRLAETQEEISAEVSAKAEKVHELNEEIGKLLAKAEQLGAEGNVDESQKILMEVEKVRAKKKEAEEEYRNSMPASSFQQQKLRVCEVCSAYLGLHDNDRRLADHFGGKLHLGFIQIREKLDQLRKTVAEKQEKRNQDRLRRREEREREERLSRRSGSRTRDRRRSRSRDRRRRRSRSTSRERRKLSRSRSRDRHRRHRSRSRSHSRGHRRASRDRSAKYKFSRERASREESWESGRSERGPPDWRLESSNGKMASRRSEEKEAGEI.

Coiled-coil stretches lie at residues 87 to 177 and 218 to 259; these read MDHL…RNSM and FIQI…LSRR. Residues 232–257 show a composition bias toward basic and acidic residues; that stretch reads VAEKQEKRNQDRLRRREEREREERLS. The tract at residues 232–371 is disordered; that stretch reads VAEKQEKRNQ…RSEEKEAGEI (140 aa). The span at 258–317 shows a compositional bias: basic residues; it reads RRSGSRTRDRRRSRSRDRRRRRSRSTSRERRKLSRSRSRDRHRRHRSRSRSHSRGHRRAS. Composition is skewed to basic and acidic residues over residues 318-351 and 361-371; these read RDRS…DWRL and RRSEEKEAGEI. Phosphoserine is present on residues Ser332, Ser336, and Ser363.

The protein belongs to the Luc7 family. As to expression, ubiquitous.

In terms of biological role, may bind to RNA via its Arg/Ser-rich domain. This Homo sapiens (Human) protein is Putative RNA-binding protein Luc7-like 1 (LUC7L).